A 463-amino-acid polypeptide reads, in one-letter code: O-acetyltransferase SAT5 (463 aa).

Belongs to the trichothecene 3-O-acetyltransferase family.

Its pathway is mycotoxin biosynthesis. Its function is as follows. O-acetyltransferase; part of the satratoxin SC1 cluster involved in the biosynthesis of satratoxins, trichothecene mycotoxins that are associated with human food poisonings. Satratoxins are suggested to be made by products of multiple gene clusters (SC1, SC2 and SC3) that encode 21 proteins in all, including polyketide synthases, acetyltransferases, and other enzymes expected to modify the trichothecene skeleton. SC1 encodes 10 proteins, SAT1 to SAT10. The largest are SAT8, which encodes a putative polyketide synthase (PKS) with a conventional non-reducing architecture, and SAT10, a putative protein containing four ankyrin repeats and thus may be involved in protein scaffolding. The putative short-chain reductase SAT3 may assist the PKS in some capacity. SAT6 contains a secretory lipase domain and acts probably as a trichothecene esterase. SAT5 encodes a putative acetyltransferase, and so, with SAT6, may affect endogenous protection from toxicity. The probable transcription factor SAT9 may regulate the expression of the SC1 cluster. SC2 encodes proteins SAT11 to SAT16, the largest of which encodes the putative reducing PKS SAT13. SAT11 is a cytochrome P450 monooxygenase, while SAT14 and SAT16 are probable acetyltransferases. The SC2 cluster may be regulated by the transcription factor SAT15. SC3 is a small cluster that encodes 5 proteins, SAT17 to SAT21. SAT21 is a putative MFS-type transporter which may have a role in exporting secondary metabolites. The four other proteins putatively encoded in SC3 include the taurine hydroxylase-like protein SAT17, the O-methyltransferase SAT18, the acetyltransferase SAT19, and the Cys6-type zinc finger SAT20, the latter being probably involved in regulation of SC3 expression. The polypeptide is O-acetyltransferase SAT5 (Stachybotrys chartarum (strain CBS 109288 / IBT 7711) (Toxic black mold)).